Consider the following 264-residue polypeptide: Acyl-[acyl-carrier-protein]--UDP-N-acetylglucosamine O-acyltransferase (264 aa).

It belongs to the transferase hexapeptide repeat family. LpxA subfamily. As to quaternary structure, homotrimer.

The protein resides in the cytoplasm. The enzyme catalyses a (3R)-hydroxyacyl-[ACP] + UDP-N-acetyl-alpha-D-glucosamine = a UDP-3-O-[(3R)-3-hydroxyacyl]-N-acetyl-alpha-D-glucosamine + holo-[ACP]. It participates in glycolipid biosynthesis; lipid IV(A) biosynthesis; lipid IV(A) from (3R)-3-hydroxytetradecanoyl-[acyl-carrier-protein] and UDP-N-acetyl-alpha-D-glucosamine: step 1/6. Its function is as follows. Involved in the biosynthesis of lipid A, a phosphorylated glycolipid that anchors the lipopolysaccharide to the outer membrane of the cell. The polypeptide is Acyl-[acyl-carrier-protein]--UDP-N-acetylglucosamine O-acyltransferase (Chlorobaculum parvum (strain DSM 263 / NCIMB 8327) (Chlorobium vibrioforme subsp. thiosulfatophilum)).